The chain runs to 325 residues: NADH-ubiquinone oxidoreductase chain 1 (325 aa).

8 helical membrane passes run 5–25 (VPAE…FLVL), 40–60 (PDVV…KLIL), 79–99 (VATF…YGMV), 105–125 (IGLL…IIAG), 151–171 (IGLI…SEIV), 177–197 (IWFG…CLAE), 237–257 (ILMS…ILDL), and 263–283 (IPCS…YIWV).

This sequence belongs to the complex I subunit 1 family.

It is found in the mitochondrion inner membrane. It catalyses the reaction a ubiquinone + NADH + 5 H(+)(in) = a ubiquinol + NAD(+) + 4 H(+)(out). Core subunit of the mitochondrial membrane respiratory chain NADH dehydrogenase (Complex I) that is believed to belong to the minimal assembly required for catalysis. Complex I functions in the transfer of electrons from NADH to the respiratory chain. The immediate electron acceptor for the enzyme is believed to be ubiquinone. This Triticum aestivum (Wheat) protein is NADH-ubiquinone oxidoreductase chain 1 (ND1).